We begin with the raw amino-acid sequence, 162 residues long: Large ribosomal subunit protein uL30 (162 aa).

It belongs to the universal ribosomal protein uL30 family. In terms of assembly, part of the 50S ribosomal subunit.

The chain is Large ribosomal subunit protein uL30 from Desulfurococcus amylolyticus (strain DSM 18924 / JCM 16383 / VKM B-2413 / 1221n) (Desulfurococcus kamchatkensis).